A 342-amino-acid polypeptide reads, in one-letter code: Deoxyguanosinetriphosphate triphosphohydrolase-like protein (342 aa).

One can recognise an HD domain in the interval 75–190 (RLVHTLEVSQ…VRFADKIAYV (116 aa)).

The protein belongs to the dGTPase family. Type 2 subfamily.

In Clostridium perfringens (strain 13 / Type A), this protein is Deoxyguanosinetriphosphate triphosphohydrolase-like protein.